Consider the following 490-residue polypeptide: Prostaglandin E2 receptor EP4 subtype (490 aa).

Topologically, residues 1–19 are extracellular; it reads MSTPGVNASASLSPDRLNS. A glycan (N-linked (GlcNAc...) asparagine) is linked at Asn7. Residues 20-43 form a helical membrane-spanning segment; sequence PVTIPAVMFIFGVVGNLVAIVVLC. At 44 to 55 the chain is on the cytoplasmic side; it reads KSRKEQKETTFY. The helical transmembrane segment at 56–79 threads the bilayer; that stretch reads TLVCGLAVTDLLGTLLVSPVTIAT. Over 80 to 96 the chain is Extracellular; the sequence is YMKGQWPGGQPLCEYST. Residues Cys92 and Cys170 are joined by a disulfide bond. A helical transmembrane segment spans residues 97-115; the sequence is FILLFFSLSGLSIICAMSV. Residues 116–135 are Cytoplasmic-facing; that stretch reads ERYLAINHAYFYSHYVDKRL. A helical transmembrane segment spans residues 136 to 160; the sequence is AGLTLFAVYASNVLFCALPNMGLGS. At 161–184 the chain is on the extracellular side; the sequence is SRLQYPDTWCFIDWTTNVTAHAAY. The helical transmembrane segment at 185-211 threads the bilayer; it reads SYMYAGFSSFLILATVLCNVLVCGALL. Residues 212–269 are Cytoplasmic-facing; sequence RMHRQFMRRTSLGTEQHHAAAAAVTSVASRGHPAASPALPRLSDFRRRRSFRRIAGAE. A helical transmembrane segment spans residues 270-297; that stretch reads IQMVILLIATSLVVLICSIPLVVRVFVN. At 298–314 the chain is on the extracellular side; that stretch reads QLYQPSLEREVSKNPDL. A helical membrane pass occupies residues 315-334; the sequence is QAIRIASVNPILDPWIYILL. The Cytoplasmic portion of the chain corresponds to 335–490; it reads RKTVLSKAIE…ETLNLSEKCI (156 aa). The interval 359 to 378 is disordered; sequence ERSGQHCSDSQRTSSAMSGH. Polar residues predominate over residues 363–378; the sequence is QHCSDSQRTSSAMSGH. 4 positions are modified to phosphoserine: Ser376, Ser379, Ser381, and Ser384. Positions 439–451 are enriched in polar residues; that stretch reads SETSDSSQGQDSE. A disordered region spans residues 439–477; the sequence is SETSDSSQGQDSESVLLVDEAGGSGRAGPAPKGSSLQVT.

Belongs to the G-protein coupled receptor 1 family. As to quaternary structure, interacts with FEM1A. Post-translationally, phosphorylation mediates agonist-mediated desensitization by promoting cytoplasmic retention.

It localises to the cell membrane. In terms of biological role, receptor for prostaglandin E2 (PGE2). The activity of this receptor is mediated by G(s) proteins that stimulate adenylate cyclase. Has a relaxing effect on smooth muscle. May play an important role in regulating renal hemodynamics, intestinal epithelial transport, adrenal aldosterone secretion, and uterine function. This is Prostaglandin E2 receptor EP4 subtype (PTGER4) from Pan troglodytes (Chimpanzee).